The sequence spans 699 residues: DNA ligase (699 aa).

The interval 1-29 is disordered; sequence MSDADVDAESNPYLRDPPTEFEPAESLSR. Residues 60–64, 108–109, and Glu-137 each bind NAD(+); these read DAAYD and SI. Lys-139 acts as the N6-AMP-lysine intermediate in catalysis. Residues Arg-160, Glu-196, Lys-311, and Lys-335 each coordinate NAD(+). Residues Cys-425, Cys-428, Cys-441, and Cys-447 each coordinate Zn(2+). The BRCT domain occupies 613-666; it reads SGGDELDGLTFVVTGTLAASRSDVTELVESHGGNVTGSVSGNTDYLVVGENPGR.

It belongs to the NAD-dependent DNA ligase family. LigA subfamily. Mg(2+) is required as a cofactor. Mn(2+) serves as cofactor.

It catalyses the reaction NAD(+) + (deoxyribonucleotide)n-3'-hydroxyl + 5'-phospho-(deoxyribonucleotide)m = (deoxyribonucleotide)n+m + AMP + beta-nicotinamide D-nucleotide.. Its activity is regulated as follows. Displays maximal in vitro activity at high salt levels. Functionally, DNA ligase that catalyzes the formation of phosphodiester linkages between 5'-phosphoryl and 3'-hydroxyl groups in double-stranded DNA using NAD as a coenzyme and as the energy source for the reaction. It is essential for DNA replication and repair of damaged DNA. This chain is DNA ligase, found in Haloferax volcanii (strain ATCC 29605 / DSM 3757 / JCM 8879 / NBRC 14742 / NCIMB 2012 / VKM B-1768 / DS2) (Halobacterium volcanii).